A 131-amino-acid chain; its full sequence is Large ribosomal subunit protein bL21 (131 aa).

The segment covering T106–A116 has biased composition (basic and acidic residues). Residues T106–E131 form a disordered region.

The protein belongs to the bacterial ribosomal protein bL21 family. Part of the 50S ribosomal subunit. Contacts protein L20.

In terms of biological role, this protein binds to 23S rRNA in the presence of protein L20. The chain is Large ribosomal subunit protein bL21 from Koribacter versatilis (strain Ellin345).